A 726-amino-acid polypeptide reads, in one-letter code: Catalase-peroxidase (726 aa).

The signal sequence occupies residues 1–16 (MDNPTDSAGKCPVAHG). Positions 1–26 (MDNPTDSAGKCPVAHGNTPRSRSNRD) are disordered. A cross-link (tryptophyl-tyrosyl-methioninium (Trp-Tyr) (with M-244)) is located at residues 96 to 218 (WHSAGTYRIT…LGAVQMGLIY (123 aa)). The Proton acceptor role is filled by histidine 97. Positions 218–244 (YVNPEGPNGTPDPLASARDIRETFARM) form a cross-link, tryptophyl-tyrosyl-methioninium (Tyr-Met) (with W-96). Histidine 259 is a heme b binding site.

This sequence belongs to the peroxidase family. Peroxidase/catalase subfamily. As to quaternary structure, homodimer or homotetramer. Heme b serves as cofactor. Formation of the three residue Trp-Tyr-Met cross-link is important for the catalase, but not the peroxidase activity of the enzyme.

It catalyses the reaction H2O2 + AH2 = A + 2 H2O. The enzyme catalyses 2 H2O2 = O2 + 2 H2O. Functionally, bifunctional enzyme with both catalase and broad-spectrum peroxidase activity. The protein is Catalase-peroxidase of Rhizobium johnstonii (strain DSM 114642 / LMG 32736 / 3841) (Rhizobium leguminosarum bv. viciae).